Reading from the N-terminus, the 131-residue chain is Transcriptional activatory protein CaiF (131 aa).

Its function is as follows. Potential transcriptional activator of carnitine metabolism. The sequence is that of Transcriptional activatory protein CaiF (caiF) from Escherichia coli (strain K12).